The following is a 283-amino-acid chain: Pantothenate synthetase (283 aa).

ATP is bound at residue 34–41; sequence MGALHDGH. H41 acts as the Proton donor in catalysis. (R)-pantoate is bound at residue Q65. Position 65 (Q65) interacts with beta-alanine. 152–155 lines the ATP pocket; that stretch reads GQKD. Q158 serves as a coordination point for (R)-pantoate. Residues V181 and 189 to 192 contribute to the ATP site; that span reads MSSR.

The protein belongs to the pantothenate synthetase family. In terms of assembly, homodimer.

It is found in the cytoplasm. It catalyses the reaction (R)-pantoate + beta-alanine + ATP = (R)-pantothenate + AMP + diphosphate + H(+). The protein operates within cofactor biosynthesis; (R)-pantothenate biosynthesis; (R)-pantothenate from (R)-pantoate and beta-alanine: step 1/1. Catalyzes the condensation of pantoate with beta-alanine in an ATP-dependent reaction via a pantoyl-adenylate intermediate. The protein is Pantothenate synthetase of Nitrobacter hamburgensis (strain DSM 10229 / NCIMB 13809 / X14).